We begin with the raw amino-acid sequence, 612 residues long: Probable Xaa-Pro aminopeptidase P (612 aa).

Residues Asp409, Asp420, Glu518, and Glu532 each coordinate Mn(2+).

Belongs to the peptidase M24B family. The cofactor is Mn(2+).

It carries out the reaction Release of any N-terminal amino acid, including proline, that is linked to proline, even from a dipeptide or tripeptide.. Catalyzes the removal of a penultimate prolyl residue from the N-termini of peptides. This chain is Probable Xaa-Pro aminopeptidase P (AMPP), found in Verticillium alfalfae (strain VaMs.102 / ATCC MYA-4576 / FGSC 10136) (Verticillium wilt of alfalfa).